A 261-amino-acid chain; its full sequence is Thioesterase TesA (261 aa).

Active-site residues include serine 104, aspartate 208, and histidine 236.

This sequence belongs to the thioesterase family.

The enzyme catalyses a fatty acyl-CoA + H2O = a fatty acid + CoA + H(+). Involved in the synthesis of both phthiocerol dimycocerosates (PDIMs) and phenolic glycolipids (PGLs), which are structurally related lipids non-covalently bound to the outer cell wall layer of M.tuberculosis and are important virulence factors. The polypeptide is Thioesterase TesA (tesA) (Mycobacterium leprae (strain TN)).